Here is a 174-residue protein sequence, read N- to C-terminus: N-terminal acetyltransferase B complex catalytic subunit NAA20 (174 aa).

One can recognise an N-acetyltransferase domain in the interval 2–151 (TTIRRFSCND…DGLDMRKALS (150 aa)).

The protein belongs to the acetyltransferase family. ARD1 subfamily.

The catalysed reaction is N-terminal L-methionyl-L-asparaginyl-[protein] + acetyl-CoA = N-terminal N(alpha)-acetyl-L-methionyl-L-asparaginyl-[protein] + CoA + H(+). The enzyme catalyses N-terminal L-methionyl-L-glutaminyl-[protein] + acetyl-CoA = N-terminal N(alpha)-acetyl-L-methionyl-L-glutaminyl-[protein] + CoA + H(+). It carries out the reaction N-terminal L-methionyl-L-aspartyl-[protein] + acetyl-CoA = N-terminal N(alpha)-acetyl-L-methionyl-L-aspartyl-[protein] + CoA + H(+). It catalyses the reaction N-terminal L-methionyl-L-glutamyl-[protein] + acetyl-CoA = N-terminal N(alpha)-acetyl-L-methionyl-L-glutamyl-[protein] + CoA + H(+). Its function is as follows. Catalytic subunit of the NatB N-alpha-acetyltransferase complex. Involved in plant immunity through the regulation of SNC1 stability. The polypeptide is N-terminal acetyltransferase B complex catalytic subunit NAA20 (Arabidopsis thaliana (Mouse-ear cress)).